The following is a 246-amino-acid chain: Polyhedrin (246 aa).

The protein belongs to the polyhedrin family.

In terms of biological role, major component of the virus occlusion bodies, which are large proteinaceous structures (polyhedra), that protect the virus from the outside environment for extended periods until they are ingested by insect larvae. The protein is Polyhedrin (PH) of Lepidoptera (butterflies and moths).